Here is a 108-residue protein sequence, read N- to C-terminus: MVIYCNWLELKGLLETNDFLYLMRCCYMYDTVSLVSNAPNIYSIPFFYDRICYDYKNILLKYELFIIYYYYYLLICLSPHFFPIKRIRPFHENPLHSFVYRIMISSEA.

A helical membrane pass occupies residues 64–84; that stretch reads LFIIYYYYYLLICLSPHFFPI.

Its subcellular location is the membrane. This is an uncharacterized protein from Schizosaccharomyces pombe (strain 972 / ATCC 24843) (Fission yeast).